A 309-amino-acid polypeptide reads, in one-letter code: Protein FdhE (309 aa).

Belongs to the FdhE family.

Its subcellular location is the cytoplasm. Necessary for formate dehydrogenase activity. The sequence is that of Protein FdhE from Escherichia coli O127:H6 (strain E2348/69 / EPEC).